The chain runs to 72 residues: Sec-independent protein translocase protein TatA (72 aa).

A helical membrane pass occupies residues 1-21 (MPFGLGLPEILVIGVIALLIF). The segment at 41-72 (KSGVSDEPAPQQSASKETAPNPPQSLPSGKDS) is disordered.

The protein belongs to the TatA/E family. In terms of assembly, forms a complex with TatC.

It is found in the cell inner membrane. Functionally, part of the twin-arginine translocation (Tat) system that transports large folded proteins containing a characteristic twin-arginine motif in their signal peptide across membranes. TatA could form the protein-conducting channel of the Tat system. In Gloeobacter violaceus (strain ATCC 29082 / PCC 7421), this protein is Sec-independent protein translocase protein TatA.